The sequence spans 154 residues: MTAAPNDWDVVLRPHWTPLFAYAAAFLIAVAHVAGGLLLKVGSSGVVFQTADQVAMGALGLVLAGAVLLFARPRLRVGSAGLSVRNLLGDRIVGWSEVIGVSFPGGSRWARIDLADDEYIPVMAIQAVDKDRAVAAMDTVRSLLARYRPDLCAR.

2 helical membrane-spanning segments follow: residues 19-39 and 51-71; these read LFAY…GLLL and ADQV…LLFA.

It is found in the cell membrane. This is an uncharacterized protein from Mycobacterium tuberculosis (strain CDC 1551 / Oshkosh).